The following is a 900-amino-acid chain: Alanine--tRNA ligase (900 aa).

The Zn(2+) site is built by His567, His571, Cys671, and His675.

The protein belongs to the class-II aminoacyl-tRNA synthetase family. Zn(2+) is required as a cofactor.

The protein localises to the cytoplasm. It catalyses the reaction tRNA(Ala) + L-alanine + ATP = L-alanyl-tRNA(Ala) + AMP + diphosphate. In terms of biological role, catalyzes the attachment of alanine to tRNA(Ala) in a two-step reaction: alanine is first activated by ATP to form Ala-AMP and then transferred to the acceptor end of tRNA(Ala). Also edits incorrectly charged Ser-tRNA(Ala) and Gly-tRNA(Ala) via its editing domain. This is Alanine--tRNA ligase from Mycoplasma pneumoniae (strain ATCC 29342 / M129 / Subtype 1) (Mycoplasmoides pneumoniae).